The primary structure comprises 260 residues: UPF0246 protein Bamb_2261 (260 aa).

The protein belongs to the UPF0246 family.

The sequence is that of UPF0246 protein Bamb_2261 from Burkholderia ambifaria (strain ATCC BAA-244 / DSM 16087 / CCUG 44356 / LMG 19182 / AMMD) (Burkholderia cepacia (strain AMMD)).